The sequence spans 277 residues: MDNVVDRHVFYISDGTAITAEVLGHAVMSQFPVTISSITLPFVENESRARAVKDQIDAIYQQTGVRPLVFYSIVLPEIRAIILQSEGFCQDIVQALVAPLQQEMKLDPTPIAHRTHGLNPGNLNKYDARIAAIDYTLAHDDGISLRNLDQAQVILLGVSRCGKTPTSLYLAMQFGIRAANYPFIADDMDNLVLPTSLKPLQHKLFGLTIDPERLAAIREERRENSRYASLRQCRMEVAEVEALYRKNQIPCLNSTNYSVEEIATKILDIMGLNRRMY.

157–164 (GVSRCGKT) serves as a coordination point for ADP.

The protein belongs to the pyruvate, phosphate/water dikinase regulatory protein family. PSRP subfamily.

The catalysed reaction is [pyruvate, water dikinase] + ADP = [pyruvate, water dikinase]-phosphate + AMP + H(+). It catalyses the reaction [pyruvate, water dikinase]-phosphate + phosphate + H(+) = [pyruvate, water dikinase] + diphosphate. Functionally, bifunctional serine/threonine kinase and phosphorylase involved in the regulation of the phosphoenolpyruvate synthase (PEPS) by catalyzing its phosphorylation/dephosphorylation. In Citrobacter koseri (strain ATCC BAA-895 / CDC 4225-83 / SGSC4696), this protein is Putative phosphoenolpyruvate synthase regulatory protein.